A 337-amino-acid chain; its full sequence is Eukaryotic translation initiation factor 3 subunit H (337 aa).

The 133-residue stretch at 21-153 (VQCDGLAVMK…LKAYRLTPQA (133 aa)) folds into the MPN domain.

The protein belongs to the eIF-3 subunit H family. As to quaternary structure, component of the eukaryotic translation initiation factor 3 (eIF-3) complex. The eIF-3 complex interacts with pix. Interacts with mxt.

The protein localises to the cytoplasm. Component of the eukaryotic translation initiation factor 3 (eIF-3) complex, which is involved in protein synthesis of a specialized repertoire of mRNAs and, together with other initiation factors, stimulates binding of mRNA and methionyl-tRNAi to the 40S ribosome. The eIF-3 complex specifically targets and initiates translation of a subset of mRNAs involved in cell proliferation. The chain is Eukaryotic translation initiation factor 3 subunit H from Drosophila ananassae (Fruit fly).